We begin with the raw amino-acid sequence, 552 residues long: MIMFCVQCEQTIRTPAGNGCSYAQGMCGKTAETSDLQDLLIAALQGLSAWAVKAREYGIINHDVDSFAPRAFFSTLTNVNFDSPRIVGYAREAIALREALKAQCLAVDANARVDNPMADLQLVSDDLGELQRQAAEFTPNKDKAAIGENILGLRLLCLYGLKGAAAYMEHAHVLGQYDNDIYAQYHKIMAWLGTWPADMNALLECSMEIGQMNFKVMSILDAGETGKYGHPTPTQVNVKATAGKCILISGHDLKDLYNLLEQTEGTGVNVYTHGEMLPAHGYPELRKFKHLVGNYGSGWQNQQVEFARFPGPIVMTSNCIIDPTVSAYDDRIWTRSIVGWPGVRHLDGDDFSAVITQAQQMAGFPYSEIPHLITVGFGRQTLLGAADTLIDLVSREKLRHIFLLGGCDGARGERHYFTDFATIVPDDCLILTLACGKYRFNKLEFGDIEGLPRLVDAGQCNDAYSAIILAVTLAEKLGCGVNDLPLSLVLSWFEQKAIVILLTLLSLGVKNIVTGPTAPGFLTPDLLAVLNEKFGLRSITTVEEDMKQLLSA.

Residues Cys-5, Cys-8, Cys-20, and Cys-27 each contribute to the [2Fe-2S] cluster site. Positions 251, 275, 319, 407, 435, 460, 494, and 496 each coordinate hybrid [4Fe-2O-2S] cluster. Cysteine persulfide is present on Cys-407.

The protein belongs to the HCP family. Requires [2Fe-2S] cluster as cofactor. The cofactor is hybrid [4Fe-2O-2S] cluster.

It localises to the cytoplasm. The catalysed reaction is A + NH4(+) + H2O = hydroxylamine + AH2 + H(+). In terms of biological role, catalyzes the reduction of hydroxylamine to form NH(3) and H(2)O. The sequence is that of Hydroxylamine reductase from Shigella boydii serotype 4 (strain Sb227).